The chain runs to 514 residues: MATPSLIPTDADRDHPVRIHRVTRTNRHLWYQLTVLQQPERARACGAGTKDSDRRPVDPPPVVELRIKEGNSFEEGKEITFDYNANFFLYASLEQSRRIAPGRMQGQPNPPILTGSPVSGMAYLDRPAAAGYFIFPDLSVRHEGHYRLSFSLFETTKDEKDLDIERASDDRLDTGADWRMEIKTSPFDVFSAKKFPGLMESTPLSKEVADQGCHVRIRRDVRMRKRDAKSNNGRDRREDDMARRRTVTPASEDPHSAAARARSMSNSSEHRVPGPPEPPGHPSAVDPAGRGHLSFGGPQYASPHQYGLQSRLPPPSPGGPYNPATQYIKPEHQSYRYPPSRDMSQTGPSPAPRQDGHDRRQSGPYVPPSPSVYSNDGRSRPESHPSYPSTPVSSHPANLPSDPSLVLPRIKSPSNSVSPSNSSLKITDLLVQPLPSSEPKLEVGSAPCPPPKTPIGSKRKHDQTFVQNDRALRNHQRQLDPHYNPVARPCSPVGEQYKRADGTYMYAKFSVFTM.

The Velvet domain occupies 26–218 (NRHLWYQLTV…ADQGCHVRIR (193 aa)). A Nuclear localization signal motif is present at residues 40–45 (ERARAC). The disordered stretch occupies residues 219-463 (RDVRMRKRDA…PIGSKRKHDQ (245 aa)). Residues 228–243 (AKSNNGRDRREDDMAR) are compositionally biased toward basic and acidic residues. The span at 256-267 (SAAARARSMSNS) shows a compositional bias: low complexity. Over residues 386–396 (SYPSTPVSSHP) the composition is skewed to polar residues. Positions 411–448 (KSPSNSVSPSNSSLKITDLLVQPLPSSEPKLEVGSAPC) are PEST. A compositionally biased stretch (low complexity) spans 412-423 (SPSNSVSPSNSS).

This sequence belongs to the velvet family. VeA subfamily. As to quaternary structure, component of the heterotrimeric velvet complex composed of laeA, veA and velB; VeA acting as a bridging protein between laeA and velB.

It localises to the nucleus. It is found in the cytoplasm. Component of the velvet transcription factor complex that controls sexual/asexual developmental ratio in response to light, promoting sexual development in the darkness while stimulating asexual sporulation under illumination. The velvet complex hat acts as a global regulator for secondary metabolite gene expression. Controls the expression of the cephalosporin C gene cluster. Regulates hyphal fragmentation. The protein is Developmental and secondary metabolism regulator veA of Hapsidospora chrysogenum (strain ATCC 11550 / CBS 779.69 / DSM 880 / IAM 14645 / JCM 23072 / IMI 49137) (Acremonium chrysogenum).